Consider the following 491-residue polypeptide: MFSKILVANRGEIAIRVMRACRELGIKSVAVYSEADKNALFTRYADEAYEIGKPAPSQSYLRIDRILEVAEKAGAEAIHPGYGFLAENPRLGEECEKQGIKLIGPKGSVIEAMGDKITSKKLMKKAGVPVIPGTDQGVSDPDEAARIADSIGYPVIIKASAGGGGIGMRAVYEEDELIRAMESTQSVAASAFGDPTVYIEKYLERPRHIEFQVMADESGNVIHLADRECSIQRRHQKLIEEAPSPIMTPELRERMGSAAVKAAEYIGYENAGTVEFLYSNGDFYFLEMNTRIQVEHPITEVITGVDLVKEQIRVASGEELRFTQKDINIRGHAIECRINAENPLADFAPNPGKITGYRSPGGIGVRVDSGVYMNYEIPPFYDSMISKLIVWGMDRQEAINRMKRALSEYIILGVKTTIPFHKAIMRNEAFRRGELHTHFVDEYRRGIDAEMRKIVKEDQEMVERLQSTFLPSKKVAAISAAIGTYMHSRRG.

Positions 1 to 445 (MFSKILVANR…HTHFVDEYRR (445 aa)) constitute a Biotin carboxylation domain. Residues K116, E200, and H235 each coordinate ATP. The region spanning 120–316 (KKLMKKAGVP…LVKEQIRVAS (197 aa)) is the ATP-grasp domain. R291 is a catalytic residue.

As to quaternary structure, heterooctamer of four A and four B subunits. Mg(2+) serves as cofactor. The cofactor is Mn(2+). It depends on Co(2+) as a cofactor.

The enzyme catalyses hydrogencarbonate + pyruvate + ATP = oxaloacetate + ADP + phosphate + H(+). It participates in carbohydrate biosynthesis; gluconeogenesis. Inhibited by ADP and alpha-ketoglutarate. Pyruvate carboxylase catalyzes a 2-step reaction, involving the ATP-dependent carboxylation of the covalently attached biotin in the first step and the transfer of the carboxyl group to pyruvate in the second. This Methanothermobacter thermautotrophicus (strain ATCC 29096 / DSM 1053 / JCM 10044 / NBRC 100330 / Delta H) (Methanobacterium thermoautotrophicum) protein is Pyruvate carboxylase subunit A (pycA).